Here is a 203-residue protein sequence, read N- to C-terminus: Shikimate kinase (203 aa).

ATP is bound at residue 32 to 37; sequence GAGKTA. Residue T36 coordinates Mg(2+). The substrate site is built by D54, R78, and G100. R138 contacts ATP. Substrate is bound at residue R157.

The protein belongs to the shikimate kinase family. As to quaternary structure, monomer. Requires Mg(2+) as cofactor.

The protein resides in the cytoplasm. It carries out the reaction shikimate + ATP = 3-phosphoshikimate + ADP + H(+). The protein operates within metabolic intermediate biosynthesis; chorismate biosynthesis; chorismate from D-erythrose 4-phosphate and phosphoenolpyruvate: step 5/7. In terms of biological role, catalyzes the specific phosphorylation of the 3-hydroxyl group of shikimic acid using ATP as a cosubstrate. The protein is Shikimate kinase of Mesorhizobium japonicum (strain LMG 29417 / CECT 9101 / MAFF 303099) (Mesorhizobium loti (strain MAFF 303099)).